The chain runs to 687 residues: Protein SDA1 homolog (687 aa).

3 disordered regions span residues 517-549 (SSDE…SQMR), 561-587 (MKQL…EPQG), and 615-687 (TVIA…KSKI). The span at 520-537 (EEQEDEDPSGENQEGEED) shows a compositional bias: acidic residues. A compositionally biased stretch (basic residues) spans 644 to 666 (EKRRKKNFMMMRHNKLVRGKTKR). A compositionally biased stretch (basic and acidic residues) spans 667-680 (SFRDKQIALRDSLL).

The protein belongs to the SDA1 family.

It localises to the nucleus. The protein localises to the nucleolus. Required for 60S pre-ribosomal subunits export to the cytoplasm. The chain is Protein SDA1 homolog (sdad1) from Nematostella vectensis (Starlet sea anemone).